The sequence spans 105 residues: MIPGEYQLKDGDIELCAGRERIQLDVGNTGDRPVQIGSHYHFAEANPALDFDRVKVRGYRLDVAAGTAIRFEPGQTRSVTLIPFAGTREIYGFRGEVMGSLDSTN.

It belongs to the urease beta subunit family. Heterotrimer of UreA (gamma), UreB (beta) and UreC (alpha) subunits. Three heterotrimers associate to form the active enzyme.

The protein resides in the cytoplasm. It catalyses the reaction urea + 2 H2O + H(+) = hydrogencarbonate + 2 NH4(+). The protein operates within nitrogen metabolism; urea degradation; CO(2) and NH(3) from urea (urease route): step 1/1. This chain is Urease subunit beta, found in Marinobacter nauticus (strain ATCC 700491 / DSM 11845 / VT8) (Marinobacter aquaeolei).